Here is a 484-residue protein sequence, read N- to C-terminus: tRNA sulfurtransferase (484 aa).

A THUMP domain is found at 63–167 (QGIRDRLSCM…DQRLFVVHDQ (105 aa)). ATP is bound by residues 185–186 (LM), lysine 267, glycine 289, and glutamine 298. Cysteine 346 and cysteine 457 form a disulfide bridge. A Rhodanese domain is found at 405 to 483 (ALAGQVIIDI…GHANVRVYRP (79 aa)). Catalysis depends on cysteine 457, which acts as the Cysteine persulfide intermediate.

The protein belongs to the ThiI family.

It localises to the cytoplasm. It catalyses the reaction [ThiI sulfur-carrier protein]-S-sulfanyl-L-cysteine + a uridine in tRNA + 2 reduced [2Fe-2S]-[ferredoxin] + ATP + H(+) = [ThiI sulfur-carrier protein]-L-cysteine + a 4-thiouridine in tRNA + 2 oxidized [2Fe-2S]-[ferredoxin] + AMP + diphosphate. It carries out the reaction [ThiS sulfur-carrier protein]-C-terminal Gly-Gly-AMP + S-sulfanyl-L-cysteinyl-[cysteine desulfurase] + AH2 = [ThiS sulfur-carrier protein]-C-terminal-Gly-aminoethanethioate + L-cysteinyl-[cysteine desulfurase] + A + AMP + 2 H(+). Its pathway is cofactor biosynthesis; thiamine diphosphate biosynthesis. Its function is as follows. Catalyzes the ATP-dependent transfer of a sulfur to tRNA to produce 4-thiouridine in position 8 of tRNAs, which functions as a near-UV photosensor. Also catalyzes the transfer of sulfur to the sulfur carrier protein ThiS, forming ThiS-thiocarboxylate. This is a step in the synthesis of thiazole, in the thiamine biosynthesis pathway. The sulfur is donated as persulfide by IscS. This chain is tRNA sulfurtransferase, found in Pseudomonas syringae pv. tomato (strain ATCC BAA-871 / DC3000).